Consider the following 3082-residue polypeptide: Autotransporter adhesin BadA (3082 aa).

The first 47 residues, 1-47 (MKKLSVTSKRQYNLYASPISRRLSLLMKLSLETVTVMFLLGASPVLA), serve as a signal peptide directing secretion. Residues 48–376 (SNLALTGAKN…DAVNVAQLKA (329 aa)) are binds to host cells. Residues 48–2901 (SNLALTGAKN…KVQDIATVAD (2854 aa)) form a surface exposed passenger domain region. Residues 53–2850 (TGAKNLSQNS…DARHNGVDSK (2798 aa)) form a does not bind host cells, no host proangiogenic cytokine induction, collagen or fibronectin, no autoagglutination region. Residues 470–2850 (ITGVAEGTDA…DARHNGVDSK (2381 aa)) form a required to bind fibronectin, not required for surface expression on bacteria, bacterial autoagglutination, host cell binding, collagen binding or host proangiogenic cytokine induction region. Positions 2902–3027 (SAVKYEKDST…VSNLRYYDIP (126 aa)) are outer membrane translocation of the passenger domain. 4 consecutive transmembrane segments (beta stranded) span residues 3028–3039 (GSLSLSFGTGIW), 3044–3051 (AFAIGAGY), 3055–3065 (DGNIRSNLSIT), and 3070–3082 (QWGV…LRLK). The interval 3028-3082 (GSLSLSFGTGIWRSQSAFAIGAGYTSEDGNIRSNLSITSSGGQWGVGAGITLRLK) is translocator domain.

Belongs to the autotransporter-2 (AT-2) (TC 1.B.40) family. As to quaternary structure, homotrimer. Crystals of the head region form trimers.

It localises to the cell surface. Its subcellular location is the cell outer membrane. Functionally, mediates bacterial adherence to host endothelial cells and host extracellular matrix proteins (collagen type I, III, IV, laminin and fibronectin). Static versus dynamic adherence results differ slightly; in dynamic adherence studies bacteria bind to fixed components under a constant defined flow rate to simulate in vivo infection conditions. Induces secretion of host proangiogenic cytokines such as VEGFA, ADM, IGFBP-3 and IL-8. May prevent bacterial phagocytosis by macrophages. Probably mediates bacterial autoagglutination. Negatively impacts type IV secretion system effectors (VirB/D4 T4SS and its substrate Bep proteins), possibly by preventing close association of host and bacterial cells. This implies the 2 factors are expressed at different times during infection. The chain is Autotransporter adhesin BadA from Bartonella henselae (Rochalimaea henselae).